The sequence spans 41 residues: Divisome-associated membrane protein Blr (41 aa).

At 1 to 3 (MNR) the chain is on the cytoplasmic side. A helical membrane pass occupies residues 4 to 24 (LIELTGWIVLVVSVILLGVAS). The Periplasmic segment spans residues 25–41 (HIDNYQPPEQSASVQHK).

In terms of assembly, interacts with FtsL and several other divisomal proteins, including FtsI, FtsK, FtsN, FtsQ, FtsW and YmgF. The N-terminus is blocked.

It is found in the cell inner membrane. In terms of biological role, component of the cell division machinery, which is probably involved in the stabilization of the divisome under certain stress conditions. This Escherichia coli (strain K12) protein is Divisome-associated membrane protein Blr (blr).